Reading from the N-terminus, the 219-residue chain is 3,4-dihydroxy-2-butanone 4-phosphate synthase (219 aa).

D-ribulose 5-phosphate is bound by residues 37 to 38 (RE), aspartate 42, 150 to 154 (RRGHT), and glutamate 174. Glutamate 38 contacts Mg(2+). Histidine 153 is a Mg(2+) binding site.

This sequence belongs to the DHBP synthase family. Homodimer. It depends on Mg(2+) as a cofactor. Mn(2+) is required as a cofactor.

The catalysed reaction is D-ribulose 5-phosphate = (2S)-2-hydroxy-3-oxobutyl phosphate + formate + H(+). It participates in cofactor biosynthesis; riboflavin biosynthesis; 2-hydroxy-3-oxobutyl phosphate from D-ribulose 5-phosphate: step 1/1. Functionally, catalyzes the conversion of D-ribulose 5-phosphate to formate and 3,4-dihydroxy-2-butanone 4-phosphate. The polypeptide is 3,4-dihydroxy-2-butanone 4-phosphate synthase (Edwardsiella ictaluri (strain 93-146)).